We begin with the raw amino-acid sequence, 127 residues long: Probable glycine cleavage system H protein (127 aa).

The Lipoyl-binding domain maps to 24–106 (TAEVGITAFA…FGDGWMLTVE (83 aa)). N6-lipoyllysine is present on Lys-65.

It belongs to the GcvH family. In terms of assembly, the glycine cleavage system is composed of four proteins: P, T, L and H. Requires (R)-lipoate as cofactor.

Its function is as follows. The glycine cleavage system catalyzes the degradation of glycine. The H protein shuttles the methylamine group of glycine from the P protein to the T protein. This Haloarcula marismortui (strain ATCC 43049 / DSM 3752 / JCM 8966 / VKM B-1809) (Halobacterium marismortui) protein is Probable glycine cleavage system H protein.